The sequence spans 102 residues: NADH-quinone oxidoreductase subunit K (102 aa).

Helical transmembrane passes span 6-26, 30-50, and 62-82; these read FEHA…ALLI, LIVM…AFIA, and VMFL…LGLG.

Belongs to the complex I subunit 4L family. As to quaternary structure, NDH-1 is composed of 14 different subunits. Subunits NuoA, H, J, K, L, M, N constitute the membrane sector of the complex.

It localises to the cell inner membrane. It catalyses the reaction a quinone + NADH + 5 H(+)(in) = a quinol + NAD(+) + 4 H(+)(out). Its function is as follows. NDH-1 shuttles electrons from NADH, via FMN and iron-sulfur (Fe-S) centers, to quinones in the respiratory chain. The immediate electron acceptor for the enzyme in this species is believed to be ubiquinone. Couples the redox reaction to proton translocation (for every two electrons transferred, four hydrogen ions are translocated across the cytoplasmic membrane), and thus conserves the redox energy in a proton gradient. The chain is NADH-quinone oxidoreductase subunit K from Methylococcus capsulatus (strain ATCC 33009 / NCIMB 11132 / Bath).